The following is a 153-amino-acid chain: Aspartate carbamoyltransferase regulatory chain (153 aa).

Zn(2+) is bound by residues Cys-109, Cys-114, Cys-138, and Cys-141.

It belongs to the PyrI family. In terms of assembly, contains catalytic and regulatory chains. The cofactor is Zn(2+).

Involved in allosteric regulation of aspartate carbamoyltransferase. This is Aspartate carbamoyltransferase regulatory chain from Klebsiella pneumoniae subsp. pneumoniae (strain ATCC 700721 / MGH 78578).